Reading from the N-terminus, the 132-residue chain is Small ribosomal subunit protein uS8 (132 aa).

The protein belongs to the universal ribosomal protein uS8 family. As to quaternary structure, part of the 30S ribosomal subunit. Contacts proteins S5 and S12.

One of the primary rRNA binding proteins, it binds directly to 16S rRNA central domain where it helps coordinate assembly of the platform of the 30S subunit. The protein is Small ribosomal subunit protein uS8 of Ligilactobacillus salivarius (strain UCC118) (Lactobacillus salivarius).